The chain runs to 284 residues: Bifunctional protein FolD (284 aa).

NADP(+)-binding positions include 165–167 (GRS), serine 190, and valine 231.

It belongs to the tetrahydrofolate dehydrogenase/cyclohydrolase family. In terms of assembly, homodimer.

The catalysed reaction is (6R)-5,10-methylene-5,6,7,8-tetrahydrofolate + NADP(+) = (6R)-5,10-methenyltetrahydrofolate + NADPH. It carries out the reaction (6R)-5,10-methenyltetrahydrofolate + H2O = (6R)-10-formyltetrahydrofolate + H(+). It functions in the pathway one-carbon metabolism; tetrahydrofolate interconversion. Functionally, catalyzes the oxidation of 5,10-methylenetetrahydrofolate to 5,10-methenyltetrahydrofolate and then the hydrolysis of 5,10-methenyltetrahydrofolate to 10-formyltetrahydrofolate. The chain is Bifunctional protein FolD from Ruminiclostridium cellulolyticum (strain ATCC 35319 / DSM 5812 / JCM 6584 / H10) (Clostridium cellulolyticum).